The sequence spans 363 residues: Probable F-box protein At4g22165 (363 aa).

The F-box domain occupies 7–56; sequence PNTWSELPLDLLNLVFKRLSLVNFQRAKSVCSTRYSVSRQCVPERQIALL.

In Arabidopsis thaliana (Mouse-ear cress), this protein is Probable F-box protein At4g22165.